Consider the following 165-residue polypeptide: Small ribosomal subunit protein uS17m (165 aa).

It belongs to the universal ribosomal protein uS17 family. In terms of assembly, component of the mitochondrial small ribosomal subunit (mt-SSU). Mature N.crassa 74S mitochondrial ribosomes consist of a small (37S) and a large (54S) subunit. The 37S small subunit contains a 16S ribosomal RNA (16S mt-rRNA) and 32 different proteins. The 54S large subunit contains a 23S rRNA (23S mt-rRNA) and 42 different proteins. uS17m interacts with the F(1)-ATPase inhibitor IF(1) dimer.

It localises to the mitochondrion. Its function is as follows. Component of the mitochondrial ribosome (mitoribosome), a dedicated translation machinery responsible for the synthesis of mitochondrial genome-encoded proteins, including at least some of the essential transmembrane subunits of the mitochondrial respiratory chain. The mitoribosomes are attached to the mitochondrial inner membrane and translation products are cotranslationally integrated into the membrane. In Neurospora crassa (strain ATCC 24698 / 74-OR23-1A / CBS 708.71 / DSM 1257 / FGSC 987), this protein is Small ribosomal subunit protein uS17m (mrps17).